The primary structure comprises 189 residues: Chitin synthase 1 (189 aa).

It belongs to the chitin synthase family. Class I subfamily.

Its subcellular location is the cell membrane. It catalyses the reaction [(1-&gt;4)-N-acetyl-beta-D-glucosaminyl](n) + UDP-N-acetyl-alpha-D-glucosamine = [(1-&gt;4)-N-acetyl-beta-D-glucosaminyl](n+1) + UDP + H(+). Functionally, polymerizes chitin, a structural polymer of the cell wall and septum, by transferring the sugar moiety of UDP-GlcNAc to the non-reducing end of the growing chitin polymer. This is Chitin synthase 1 (CHS1) from Rhinocladiella atrovirens.